The chain runs to 475 residues: UDP-glycosyltransferase 76E1 (475 aa).

Histidine 19 (proton acceptor) is an active-site residue. An anthocyanidin is bound at residue histidine 19. Catalysis depends on aspartate 109, which acts as the Charge relay. 8 residues coordinate UDP-alpha-D-glucose: threonine 131, alanine 329, glutamine 331, histidine 346, tryptophan 349, asparagine 350, serine 351, and glutamate 354. Alanine 369 is an an anthocyanidin binding site. UDP-alpha-D-glucose contacts are provided by aspartate 370 and glutamine 371.

It belongs to the UDP-glycosyltransferase family. Expressed in flowers and fruits.

It is found in the cytoplasm. It localises to the nucleus. It catalyses the reaction 2-cis-(+)-abscisate + UDP-alpha-D-glucose = beta-D-glucopyranosyl cis-(+)-abscisate + UDP. Glucosyltransferase acting on abscisic acid (ABA) but not on auxin (IAA). This is UDP-glycosyltransferase 76E1 from Solanum lycopersicum (Tomato).